A 440-amino-acid polypeptide reads, in one-letter code: Serine protease inhibitor A3G (440 aa).

The tract at residues 357 to 382 (GTEAAAATGMAGVGCCAVFDFLEIFF) is RCL.

The protein belongs to the serpin family. In terms of tissue distribution, expressed in bone marrow (particularly hematopoietic stem cells), heart, kidney, liver, lung, skeletal muscle, spleen, testis, thymus and T-cells.

The protein localises to the cytoplasm. The protein resides in the nucleus. In terms of biological role, serine and cysteine protease inhibitor. Can inhibit lysosomal papain-like proteases including the cathepsins B, G, H, K, L and V. Ineffective against elastase, granzyme A, granzyme B, or caspases 3, 8 or 9. Inhibition of cytoplasmic cathepsin B following release from the lysosome may protect cells from apoptosis. This may facilitate the survival of progenitor T-cells and the subsequent development of long term memory CD8 T-cells. This Mus musculus (Mouse) protein is Serine protease inhibitor A3G (Serpina3g).